Consider the following 354-residue polypeptide: Phosphoribosylformylglycinamidine cyclo-ligase (354 aa).

It belongs to the AIR synthase family.

The protein resides in the cytoplasm. The enzyme catalyses 2-formamido-N(1)-(5-O-phospho-beta-D-ribosyl)acetamidine + ATP = 5-amino-1-(5-phospho-beta-D-ribosyl)imidazole + ADP + phosphate + H(+). Its pathway is purine metabolism; IMP biosynthesis via de novo pathway; 5-amino-1-(5-phospho-D-ribosyl)imidazole from N(2)-formyl-N(1)-(5-phospho-D-ribosyl)glycinamide: step 2/2. In Synechococcus sp. (strain JA-2-3B'a(2-13)) (Cyanobacteria bacterium Yellowstone B-Prime), this protein is Phosphoribosylformylglycinamidine cyclo-ligase.